Here is a 137-residue protein sequence, read N- to C-terminus: ATP synthase epsilon chain (137 aa).

It belongs to the ATPase epsilon chain family. In terms of assembly, F-type ATPases have 2 components, CF(1) - the catalytic core - and CF(0) - the membrane proton channel. CF(1) has five subunits: alpha(3), beta(3), gamma(1), delta(1), epsilon(1). CF(0) has three main subunits: a, b and c.

It localises to the cell membrane. Functionally, produces ATP from ADP in the presence of a proton gradient across the membrane. The sequence is that of ATP synthase epsilon chain from Caldicellulosiruptor bescii (strain ATCC BAA-1888 / DSM 6725 / KCTC 15123 / Z-1320) (Anaerocellum thermophilum).